A 190-amino-acid polypeptide reads, in one-letter code: Probable DNA replication complex GINS protein PSF2 (190 aa).

The protein belongs to the GINS2/PSF2 family. As to quaternary structure, component of the GINS complex which is a heterotetramer of gins1, gins2, gins3 and gins4.

It localises to the nucleus. In terms of biological role, the GINS complex plays an essential role in the initiation of DNA replication. This chain is Probable DNA replication complex GINS protein PSF2, found in Brugia malayi (Filarial nematode worm).